The chain runs to 115 residues: Large ribosomal subunit protein bL19 (115 aa).

The protein belongs to the bacterial ribosomal protein bL19 family.

This protein is located at the 30S-50S ribosomal subunit interface and may play a role in the structure and function of the aminoacyl-tRNA binding site. This chain is Large ribosomal subunit protein bL19, found in Lacticaseibacillus casei (strain BL23) (Lactobacillus casei).